Here is a 489-residue protein sequence, read N- to C-terminus: Betaine aldehyde dehydrogenase (489 aa).

Residues Thr-26 and Asp-93 each coordinate K(+). 150-152 lines the NAD(+) pocket; sequence GAW. Residue Lys-162 is the Charge relay system of the active site. 176–179 contributes to the NAD(+) binding site; it reads KPSE. Ile-180 contributes to the K(+) binding site. 229–232 lines the NAD(+) pocket; it reads GVET. A K(+)-binding site is contributed by Leu-245. Glu-251 serves as the catalytic Proton acceptor. NAD(+) is bound by residues Gly-253, Cys-285, and Glu-386. Cys-285 (nucleophile) is an active-site residue. Cys-285 is modified (cysteine sulfenic acid (-SOH)). Residues Lys-456 and Gly-459 each contribute to the K(+) site. Glu-463 (charge relay system) is an active-site residue.

This sequence belongs to the aldehyde dehydrogenase family. Dimer of dimers. K(+) serves as cofactor.

It catalyses the reaction betaine aldehyde + NAD(+) + H2O = glycine betaine + NADH + 2 H(+). The protein operates within amine and polyamine biosynthesis; betaine biosynthesis via choline pathway; betaine from betaine aldehyde: step 1/1. In terms of biological role, involved in the biosynthesis of the osmoprotectant glycine betaine. Catalyzes the irreversible oxidation of betaine aldehyde to the corresponding acid. In Paraburkholderia xenovorans (strain LB400), this protein is Betaine aldehyde dehydrogenase.